The primary structure comprises 429 residues: Serine--tRNA ligase (429 aa).

229–231 (TAE) serves as a coordination point for L-serine. 260 to 262 (RSE) serves as a coordination point for ATP. Glutamate 283 serves as a coordination point for L-serine. Residue 347–350 (EISS) participates in ATP binding. Position 383 (serine 383) interacts with L-serine.

The protein belongs to the class-II aminoacyl-tRNA synthetase family. Type-1 seryl-tRNA synthetase subfamily. As to quaternary structure, homodimer. The tRNA molecule binds across the dimer.

The protein localises to the cytoplasm. The enzyme catalyses tRNA(Ser) + L-serine + ATP = L-seryl-tRNA(Ser) + AMP + diphosphate + H(+). It catalyses the reaction tRNA(Sec) + L-serine + ATP = L-seryl-tRNA(Sec) + AMP + diphosphate + H(+). It participates in aminoacyl-tRNA biosynthesis; selenocysteinyl-tRNA(Sec) biosynthesis; L-seryl-tRNA(Sec) from L-serine and tRNA(Sec): step 1/1. Its function is as follows. Catalyzes the attachment of serine to tRNA(Ser). Is also able to aminoacylate tRNA(Sec) with serine, to form the misacylated tRNA L-seryl-tRNA(Sec), which will be further converted into selenocysteinyl-tRNA(Sec). The protein is Serine--tRNA ligase of Orientia tsutsugamushi (strain Ikeda) (Rickettsia tsutsugamushi).